The primary structure comprises 33 residues: Beta-amanitin proprotein (33 aa).

The propeptide occupies 1–10 (MSDINATRLP). The segment at residues 11-18 (IWGIGCDP) is a cross-link (cyclopeptide (Ile-Pro)). The segment at residues 12-16 (WGIGC) is a cross-link (2'-cysteinyl-6'-hydroxytryptophan sulfoxide (Trp-Cys)). The propeptide occupies 19–33 (CVGDDVTAVLTRGEA).

It belongs to the MSDIN fungal toxin family. In terms of processing, processed by the macrocyclase-peptidase enzyme POPB to yield a toxic cyclic decapeptide. POPB first removes 10 residues from the N-terminus. Conformational trapping of the remaining peptide forces the enzyme to release this intermediate rather than proceed to macrocyclization. The enzyme rebinds the remaining peptide in a different conformation and catalyzes macrocyclization of the N-terminal 8 residues.

Its function is as follows. Toxin belonging to the bicyclic octapeptides amatoxins that acts by binding non-competitively to RNA polymerase II and greatly slowing the elongation of transcripts from target promoters. The chain is Beta-amanitin proprotein from Amanita pallidorosea.